Consider the following 475-residue polypeptide: Argininosuccinate lyase 1 (475 aa).

Belongs to the lyase 1 family. Argininosuccinate lyase subfamily.

It is found in the cytoplasm. It catalyses the reaction 2-(N(omega)-L-arginino)succinate = fumarate + L-arginine. It functions in the pathway amino-acid biosynthesis; L-arginine biosynthesis; L-arginine from L-ornithine and carbamoyl phosphate: step 3/3. The protein is Argininosuccinate lyase 1 of Pseudomonas fluorescens (strain Pf0-1).